The primary structure comprises 436 residues: Methanethiol oxidase (436 aa).

A signal peptide spans 1 to 24 (MKRREFGALAAGALAMGLPFRAFA).

Belongs to the selenium-binding protein family.

It is found in the periplasm. It carries out the reaction methanethiol + O2 + H2O = hydrogen sulfide + formaldehyde + H2O2 + H(+). It participates in organosulfur degradation. Functionally, catalyzes the oxidation of methanethiol. The protein is Methanethiol oxidase of Ruegeria pomeroyi (strain ATCC 700808 / DSM 15171 / DSS-3) (Silicibacter pomeroyi).